The primary structure comprises 92 residues: Large ribosomal subunit protein bL25 (92 aa).

Belongs to the bacterial ribosomal protein bL25 family. Part of the 50S ribosomal subunit; part of the 5S rRNA/L5/L18/L25 subcomplex. Contacts the 5S rRNA. Binds to the 5S rRNA independently of L5 and L18.

This is one of the proteins that binds to the 5S RNA in the ribosome where it forms part of the central protuberance. The sequence is that of Large ribosomal subunit protein bL25 from Vibrio vulnificus (strain CMCP6).